The primary structure comprises 399 residues: Phosphoglycerate kinase (399 aa).

Residues 24 to 26, arginine 41, 64 to 67, arginine 123, and arginine 160 each bind substrate; these read DLN and HLGR. ATP is bound by residues lysine 210, glycine 298, glutamate 329, and 355–358; that span reads GGDS.

Belongs to the phosphoglycerate kinase family. Monomer.

The protein resides in the cytoplasm. The catalysed reaction is (2R)-3-phosphoglycerate + ATP = (2R)-3-phospho-glyceroyl phosphate + ADP. It participates in carbohydrate degradation; glycolysis; pyruvate from D-glyceraldehyde 3-phosphate: step 2/5. The protein is Phosphoglycerate kinase of Salinispora tropica (strain ATCC BAA-916 / DSM 44818 / JCM 13857 / NBRC 105044 / CNB-440).